The chain runs to 227 residues: Cytochrome c oxidase subunit 2 (227 aa).

The Mitochondrial intermembrane segment spans residues 1 to 14 (MAYPFELGFQDATS). A helical transmembrane segment spans residues 15–45 (PIMEELLHFHDHTLMIVFLISSLVLYIISLM). The Mitochondrial matrix segment spans residues 46-59 (LTTKLTHTSTMDAQ). A helical membrane pass occupies residues 60–87 (EVETIWTILPAIILILIALPSLRILYMM). Over 88 to 227 (DEINDPSLTV…HFENWSSSML (140 aa)) the chain is Mitochondrial intermembrane. The Cu cation site is built by His161, Cys196, Glu198, Cys200, His204, and Met207. Position 198 (Glu198) interacts with Mg(2+).

This sequence belongs to the cytochrome c oxidase subunit 2 family. In terms of assembly, component of the cytochrome c oxidase (complex IV, CIV), a multisubunit enzyme composed of 14 subunits. The complex is composed of a catalytic core of 3 subunits MT-CO1, MT-CO2 and MT-CO3, encoded in the mitochondrial DNA, and 11 supernumerary subunits COX4I, COX5A, COX5B, COX6A, COX6B, COX6C, COX7A, COX7B, COX7C, COX8 and NDUFA4, which are encoded in the nuclear genome. The complex exists as a monomer or a dimer and forms supercomplexes (SCs) in the inner mitochondrial membrane with NADH-ubiquinone oxidoreductase (complex I, CI) and ubiquinol-cytochrome c oxidoreductase (cytochrome b-c1 complex, complex III, CIII), resulting in different assemblies (supercomplex SCI(1)III(2)IV(1) and megacomplex MCI(2)III(2)IV(2)). Found in a complex with TMEM177, COA6, COX18, COX20, SCO1 and SCO2. Interacts with TMEM177 in a COX20-dependent manner. Interacts with COX20. Interacts with COX16. Cu cation is required as a cofactor.

It is found in the mitochondrion inner membrane. The enzyme catalyses 4 Fe(II)-[cytochrome c] + O2 + 8 H(+)(in) = 4 Fe(III)-[cytochrome c] + 2 H2O + 4 H(+)(out). Functionally, component of the cytochrome c oxidase, the last enzyme in the mitochondrial electron transport chain which drives oxidative phosphorylation. The respiratory chain contains 3 multisubunit complexes succinate dehydrogenase (complex II, CII), ubiquinol-cytochrome c oxidoreductase (cytochrome b-c1 complex, complex III, CIII) and cytochrome c oxidase (complex IV, CIV), that cooperate to transfer electrons derived from NADH and succinate to molecular oxygen, creating an electrochemical gradient over the inner membrane that drives transmembrane transport and the ATP synthase. Cytochrome c oxidase is the component of the respiratory chain that catalyzes the reduction of oxygen to water. Electrons originating from reduced cytochrome c in the intermembrane space (IMS) are transferred via the dinuclear copper A center (CU(A)) of subunit 2 and heme A of subunit 1 to the active site in subunit 1, a binuclear center (BNC) formed by heme A3 and copper B (CU(B)). The BNC reduces molecular oxygen to 2 water molecules using 4 electrons from cytochrome c in the IMS and 4 protons from the mitochondrial matrix. The protein is Cytochrome c oxidase subunit 2 (MT-CO2) of Neotamias bulleri (Buller's chipmunk).